The chain runs to 266 residues: Glucosamine-6-phosphate deaminase (266 aa).

D72 acts as the Proton acceptor; for enolization step in catalysis. Catalysis depends on D141, which acts as the For ring-opening step. H143 acts as the Proton acceptor; for ring-opening step in catalysis. The active-site For ring-opening step is E148.

It belongs to the glucosamine/galactosamine-6-phosphate isomerase family. NagB subfamily. Homohexamer.

The catalysed reaction is alpha-D-glucosamine 6-phosphate + H2O = beta-D-fructose 6-phosphate + NH4(+). It functions in the pathway amino-sugar metabolism; N-acetylneuraminate degradation; D-fructose 6-phosphate from N-acetylneuraminate: step 5/5. With respect to regulation, allosterically activated by N-acetylglucosamine 6-phosphate (GlcNAc6P). Catalyzes the reversible isomerization-deamination of glucosamine 6-phosphate (GlcN6P) to form fructose 6-phosphate (Fru6P) and ammonium ion. The sequence is that of Glucosamine-6-phosphate deaminase from Yersinia pestis bv. Antiqua (strain Antiqua).